Reading from the N-terminus, the 372-residue chain is Chaperone protein DnaJ (372 aa).

The J domain occupies 5 to 69 (DYYEVLGVSK…DKRKQYDQFG (65 aa)). The CR-type zinc finger occupies 139–221 (GVDKIIELDL…CKGKGKYLER (83 aa)). The Zn(2+) site is built by C152, C155, C169, C172, C195, C198, C209, and C212. 4 CXXCXGXG motif repeats span residues 152-159 (CSACFGSG), 169-176 (CNNCHGTG), 195-202 (CNVCNGAG), and 209-216 (CKNCKGKG).

It belongs to the DnaJ family. As to quaternary structure, homodimer. Requires Zn(2+) as cofactor.

It localises to the cytoplasm. Participates actively in the response to hyperosmotic and heat shock by preventing the aggregation of stress-denatured proteins and by disaggregating proteins, also in an autonomous, DnaK-independent fashion. Unfolded proteins bind initially to DnaJ; upon interaction with the DnaJ-bound protein, DnaK hydrolyzes its bound ATP, resulting in the formation of a stable complex. GrpE releases ADP from DnaK; ATP binding to DnaK triggers the release of the substrate protein, thus completing the reaction cycle. Several rounds of ATP-dependent interactions between DnaJ, DnaK and GrpE are required for fully efficient folding. Also involved, together with DnaK and GrpE, in the DNA replication of plasmids through activation of initiation proteins. The polypeptide is Chaperone protein DnaJ (Mycoplasma capricolum subsp. capricolum (strain California kid / ATCC 27343 / NCTC 10154)).